Reading from the N-terminus, the 103-residue chain is Large ribosomal subunit protein bL21 (103 aa).

The protein belongs to the bacterial ribosomal protein bL21 family. In terms of assembly, part of the 50S ribosomal subunit. Contacts protein L20.

This protein binds to 23S rRNA in the presence of protein L20. This is Large ribosomal subunit protein bL21 from Clostridium perfringens (strain ATCC 13124 / DSM 756 / JCM 1290 / NCIMB 6125 / NCTC 8237 / Type A).